The sequence spans 401 residues: Elongation factor Tu 2 (401 aa).

Residues Lys-10–Val-209 form the tr-type G domain. Residues Gly-19–Thr-26 form a G1 region. Gly-19–Thr-26 serves as a coordination point for GTP. Residue Thr-26 participates in Mg(2+) binding. The segment at Gly-60 to Ala-64 is G2. Residues Asp-81 to Gly-84 are G3. GTP-binding positions include Asp-81–His-85 and Asn-136–Asp-139. A G4 region spans residues Asn-136–Asp-139. The G5 stretch occupies residues Ser-174–Leu-176.

The protein belongs to the TRAFAC class translation factor GTPase superfamily. Classic translation factor GTPase family. EF-Tu/EF-1A subfamily. As to quaternary structure, monomer.

The protein resides in the cytoplasm. It carries out the reaction GTP + H2O = GDP + phosphate + H(+). GTP hydrolase that promotes the GTP-dependent binding of aminoacyl-tRNA to the A-site of ribosomes during protein biosynthesis. This is Elongation factor Tu 2 from Roseiflexus castenholzii (strain DSM 13941 / HLO8).